The chain runs to 378 residues: Putative F-box protein At5g51000 (378 aa).

The 47-residue stretch at 1–47 (MSTMSDLFPDLVEEILSRVPITSLKAVKLTCKQWNDLSKDSSFTKNH) folds into the F-box domain.

This chain is Putative F-box protein At5g51000, found in Arabidopsis thaliana (Mouse-ear cress).